The primary structure comprises 400 residues: Ribosomal RNA large subunit methyltransferase I (400 aa).

A PUA domain is found at 6–84; that stretch reads FPRLVLAKGR…NEAIDSAFFE (79 aa).

The protein belongs to the methyltransferase superfamily. RlmI family.

The protein localises to the cytoplasm. It carries out the reaction cytidine(1962) in 23S rRNA + S-adenosyl-L-methionine = 5-methylcytidine(1962) in 23S rRNA + S-adenosyl-L-homocysteine + H(+). In terms of biological role, specifically methylates the cytosine at position 1962 (m5C1962) of 23S rRNA. In Klebsiella pneumoniae subsp. pneumoniae (strain ATCC 700721 / MGH 78578), this protein is Ribosomal RNA large subunit methyltransferase I.